We begin with the raw amino-acid sequence, 283 residues long: uncharacterized protein (283 aa).

A signal peptide spans 1 to 21 (MKLKLKFLLISLLGSSLLLSA). A lipid anchor (N-palmitoyl cysteine) is attached at cysteine 22. A lipid anchor (S-diacylglycerol cysteine) is attached at cysteine 22.

Belongs to the MG439/MG440 family.

It localises to the cell membrane. This is an uncharacterized protein from Mycoplasma pneumoniae (strain ATCC 29342 / M129 / Subtype 1) (Mycoplasmoides pneumoniae).